The following is a 511-amino-acid chain: Histidine ammonia-lyase (511 aa).

The segment at residues 143–145 (ASG) is a cross-link (5-imidazolinone (Ala-Gly)). 2,3-didehydroalanine (Ser) is present on Ser144.

The protein belongs to the PAL/histidase family. In terms of processing, contains an active site 4-methylidene-imidazol-5-one (MIO), which is formed autocatalytically by cyclization and dehydration of residues Ala-Ser-Gly.

The protein resides in the cytoplasm. It carries out the reaction L-histidine = trans-urocanate + NH4(+). It functions in the pathway amino-acid degradation; L-histidine degradation into L-glutamate; N-formimidoyl-L-glutamate from L-histidine: step 1/3. The polypeptide is Histidine ammonia-lyase (Vibrio parahaemolyticus serotype O3:K6 (strain RIMD 2210633)).